The following is a 243-amino-acid chain: Orotidine 5'-phosphate decarboxylase (243 aa).

Substrate is bound by residues D18, K39, 66–75 (DLKFHDIPTT), T130, R192, Q201, G221, and R222. The Proton donor role is filled by K68.

Belongs to the OMP decarboxylase family. Type 1 subfamily. Homodimer.

It catalyses the reaction orotidine 5'-phosphate + H(+) = UMP + CO2. It participates in pyrimidine metabolism; UMP biosynthesis via de novo pathway; UMP from orotate: step 2/2. Catalyzes the decarboxylation of orotidine 5'-monophosphate (OMP) to uridine 5'-monophosphate (UMP). The chain is Orotidine 5'-phosphate decarboxylase from Synechococcus sp. (strain CC9311).